The sequence spans 506 residues: MGTYPAFSGSPQLPEQRLHGTTNLNPAGGYRIELQIQDATFDKYPAKQHAQRVAAKIKKGKGLIFLMGQKAALLEDSDQETRFRQRRYFFYMSGVNEADCDLTYDIQSDKLTLYVPNFDLGREIWMGPTLGPQDALKRYDIDEAKYQSFLQGDIKQWASCSGHGSTIYTLHDSQKPTGDFPNVFMDSETLKPAMDACRVIKDEHEIEQMRHANRVSTAAHIAVLQGICKMTNEAQIEGSFLNTCVSLGAHNQAYGIIAASGANAATLHYSKNNEPLKGRQFVCLDAGAEWNCHASDVTRTFPLTARWPGTEAEQIYALVQNMQESCILRIKEGVRYLDLHHLAHDILIHGFLAIGIFKAGTADEIKKSGASSLFFPHGLGHHIGLEVHDVSPDSIFAQDNDGTTDSWLFSSTYLSPCTASSPTLKSGMVVTVEPGIYFSQIALDNAKPAQLKHIDMDVVKRYMAVGGVRIEDDILVTKDGFENLTSAPKGQAMLDYIQQGNGSCDI.

Positions 285, 296, 433, and 471 each coordinate Mn(2+).

This sequence belongs to the peptidase M24B family. Mn(2+) is required as a cofactor.

It carries out the reaction Release of any N-terminal amino acid, including proline, that is linked to proline, even from a dipeptide or tripeptide.. Catalyzes the removal of a penultimate prolyl residue from the N-termini of peptides. This chain is Probable Xaa-Pro aminopeptidase PADG_06815, found in Paracoccidioides brasiliensis (strain Pb18).